Here is a 695-residue protein sequence, read N- to C-terminus: Nucleoprotein (695 aa).

Coiled coils occupy residues 316 to 341 and 372 to 399; these read VNVG…RRHE and QTLA…VEDQ. 3 disordered regions span residues 423–458, 483–515, and 527–612; these read VQAR…SFVD, TSRE…TNPI, and PVQE…DTRA. Composition is skewed to polar residues over residues 495 to 505 and 537 to 552; these read RQSQDLNNSQG and TTDS…SDNE. The PTAP/PSAP motif motif lies at 603-606; the sequence is PSAP.

This sequence belongs to the filoviruses nucleoprotein family. As to quaternary structure, homooligomer. Homomultimerizes to form the nucleocapsid. Binds to viral genomic RNA. Interacts with VP35 and VP30 to form the nucleocapsid. Also interacts with VP24 and VP40. Post-translationally, phosphorylated.

Its subcellular location is the virion. It localises to the host cytoplasm. Encapsidates the genome, protecting it from nucleases. The encapsidated genomic RNA is termed the nucleocapsid and serves as template for transcription and replication. During replication, encapsidation by NP is coupled to RNA synthesis and all replicative products are resistant to nucleases. The chain is Nucleoprotein (NP) from Chlorocebus aethiops (Green monkey).